The chain runs to 347 residues: Probable RNA methyltransferase azo0122 (347 aa).

Glu-89 functions as the Proton acceptor in the catalytic mechanism. The Radical SAM core domain occupies 92 to 318 (LLLRDGLCVS…AKLRQSAGQD (227 aa)). Cys-99 and Cys-323 form a disulfide bridge. Positions 106, 110, and 113 each coordinate [4Fe-4S] cluster. Residues 151 to 152 (GE), Ser-181, 204 to 206 (SLH), and Asn-280 contribute to the S-adenosyl-L-methionine site. Cys-323 (S-methylcysteine intermediate) is an active-site residue.

Belongs to the radical SAM superfamily. RlmN family. [4Fe-4S] cluster serves as cofactor.

Its subcellular location is the cytoplasm. This chain is Probable RNA methyltransferase azo0122, found in Azoarcus sp. (strain BH72).